The sequence spans 390 residues: Small ribosomal subunit protein uS9m (390 aa).

A disordered region spans residues 368–390 (PRIRERKKPGQEGARRKFTWKKR).

It belongs to the universal ribosomal protein uS9 family. As to quaternary structure, component of the mitochondrial ribosome small subunit (28S) which comprises a 12S rRNA and about 30 distinct proteins.

It is found in the mitochondrion. The sequence is that of Small ribosomal subunit protein uS9m (Mrps9) from Mus musculus (Mouse).